We begin with the raw amino-acid sequence, 555 residues long: 2-succinyl-5-enolpyruvyl-6-hydroxy-3-cyclohexene-1-carboxylate synthase (555 aa).

This sequence belongs to the TPP enzyme family. MenD subfamily. As to quaternary structure, homodimer. Mg(2+) serves as cofactor. The cofactor is Mn(2+). Requires thiamine diphosphate as cofactor.

The catalysed reaction is isochorismate + 2-oxoglutarate + H(+) = 5-enolpyruvoyl-6-hydroxy-2-succinyl-cyclohex-3-ene-1-carboxylate + CO2. It functions in the pathway quinol/quinone metabolism; 1,4-dihydroxy-2-naphthoate biosynthesis; 1,4-dihydroxy-2-naphthoate from chorismate: step 2/7. Its pathway is quinol/quinone metabolism; menaquinone biosynthesis. In terms of biological role, catalyzes the thiamine diphosphate-dependent decarboxylation of 2-oxoglutarate and the subsequent addition of the resulting succinic semialdehyde-thiamine pyrophosphate anion to isochorismate to yield 2-succinyl-5-enolpyruvyl-6-hydroxy-3-cyclohexene-1-carboxylate (SEPHCHC). In Bacteroides fragilis (strain ATCC 25285 / DSM 2151 / CCUG 4856 / JCM 11019 / LMG 10263 / NCTC 9343 / Onslow / VPI 2553 / EN-2), this protein is 2-succinyl-5-enolpyruvyl-6-hydroxy-3-cyclohexene-1-carboxylate synthase.